A 296-amino-acid chain; its full sequence is Small ribosomal subunit protein uS2m (296 aa).

A disordered region spans residues 274-296 (QGQKEPGDQGPAHPPGADMSHSL).

This sequence belongs to the universal ribosomal protein uS2 family. As to quaternary structure, component of the mitochondrial small ribosomal subunit (mt-SSU). Mature mammalian 55S mitochondrial ribosomes consist of a small (28S) and a large (39S) subunit. The 28S small subunit contains a 12S ribosomal RNA (12S mt-rRNA) and 30 different proteins. The 39S large subunit contains a 16S rRNA (16S mt-rRNA), a copy of mitochondrial valine transfer RNA (mt-tRNA(Val)), which plays an integral structural role, and 52 different proteins.

The protein localises to the mitochondrion. Functionally, required for mitoribosome formation and stability, and mitochondrial translation. The sequence is that of Small ribosomal subunit protein uS2m (MRPS2) from Homo sapiens (Human).